The primary structure comprises 65 residues: Potassium channel toxin kappa-KTx 2.6 (65 aa).

The signal sequence occupies residues 1–27 (MKTSKMICAFLLVLVVGTFNDISGAYG). Residues 28 to 39 (EYVEDQHSFKIE) constitute a propeptide that is removed on maturation. Disulfide bonds link cysteine 45–cysteine 63 and cysteine 49–cysteine 59.

Belongs to the short scorpion toxin superfamily. Potassium channel inhibitor kappa-KTx family. Kappa-KTx 2 subfamily. As to expression, expressed by the venom gland.

Its subcellular location is the secreted. Functionally, potassium channel inhibitor (Kv). This Opisthacanthus cayaporum (South American scorpion) protein is Potassium channel toxin kappa-KTx 2.6.